The sequence spans 869 residues: Aminopeptidase N (869 aa).

Residues E122 and 262–266 each bind substrate; that span reads GAMEN. H298 is a Zn(2+) binding site. E299 (proton acceptor) is an active-site residue. Residues H302 and E321 each coordinate Zn(2+).

Belongs to the peptidase M1 family. Zn(2+) serves as cofactor.

It localises to the cell inner membrane. The catalysed reaction is Release of an N-terminal amino acid, Xaa-|-Yaa- from a peptide, amide or arylamide. Xaa is preferably Ala, but may be most amino acids including Pro (slow action). When a terminal hydrophobic residue is followed by a prolyl residue, the two may be released as an intact Xaa-Pro dipeptide.. Its function is as follows. Aminopeptidase N is involved in the degradation of intracellular peptides generated by protein breakdown during normal growth as well as in response to nutrient starvation. This is Aminopeptidase N (pepN) from Haemophilus influenzae (strain ATCC 51907 / DSM 11121 / KW20 / Rd).